The primary structure comprises 791 residues: Cullin-2 (791 aa).

Positions 722 to 784 (DRKYYMECAI…KMYIQRTDQN (63 aa)) constitute a Cullin neddylation domain. A Glycyl lysine isopeptide (Lys-Gly) (interchain with G-Cter in NEDD8) cross-link involves residue Lys-736.

Belongs to the cullin family. As to quaternary structure, component of multiple CBC (Cul2-ElonginB-ElonginC) E3 ubiquitin-protein ligase complexes formed of cul-2, elb-1, elc-1, rbx-1 and a variable substrate recognition component. Component of the CBC(fem-1) E3 ubiquitin-protein ligase complex with fem-1, fem-2 and fem-3. The CBC(fem-1) complex interacts with tra-1 and promotes tra-1 degradation. Probable component of the CBC(lrr-1) E3 ubiquitin-protein ligase complex incuding cul-2, elb-1, elc-1, rbx-1 and lrr-1. The CBC(lrr-1) complex interacts with the DNA replisome complex at the end of S phase; the interaction promotes the release of components of the CMG helicase complex (a component of the replisome) from chromatin. Probable component of an CBC(zif-1) E3 ubiquitin-protein ligase including cul-2, elc-1, rbx-1 and zif-1. Part of an E3 ubiquitin-protein ligase complex including cul-2, elc-1 and zyg-11. Interacts with Skp1-related protein skr-10. Neddylated; which enhances the ubiquitination activity of CBC (Cul2-ElonginB-ElonginC) E3 ubiquitin-protein ligase complexes. In terms of tissue distribution, in adults, highly expressed in meiotic cells and oocytes. In larvae, expressed in many proliferating cell types: P cells during the L1 stage; seam cells when they divide at every molt; vulval and somatic gonad cells in late L3 and L4 stages; and intestinal cells throughout larval development.

The protein resides in the cytoplasm. It localises to the nucleus. The protein operates within protein modification; protein ubiquitination. Functionally, core component of multiple cullin-RING-based CBC (Cul2-ElonginB-ElonginC) E3 ubiquitin-protein ligase complexes which mediate the ubiquitination and subsequent proteasomal degradation of target proteins. As a scaffold protein may contribute to catalysis through positioning of the substrate and the ubiquitin-conjugating enzyme. The functional specificity of the CBC complex depends on the variable substrate recognition component. May function in ubiquitin-mediated degradation of CKIs to target cki-1 for degradation. CBC(zif-1) may ensure germline precursor cell asymmetry by targeting germline proteins for destruction if expressed in non-germline cells. As part of the CBC(fem-1) complex directs ubiquitination of tra-1. As part of the CBC(lrr-1) complex, required for the ubiquitination and dissasembly of the CMG helicase complex from chromatin at the end of DNA replication. Positive cell-cycle regulator that is required at two distinct points in the cell cycle; the G1-to-S-phase transition and mitosis. Also required for proper cytoskeletal movement and mitotic chromosome condensation. This Caenorhabditis elegans protein is Cullin-2.